We begin with the raw amino-acid sequence, 299 residues long: Probable lipid kinase YegS (299 aa).

The 132-residue stretch at 2 to 133 folds into the DAGKc domain; that stretch reads AEFPASLLIL…IDMAQVNKQT (132 aa). ATP is bound by residues Thr-40, 66 to 72, and Thr-95; that span reads GDGTINE. Positions 215, 218, and 220 each coordinate Mg(2+). The Proton acceptor role is filled by Glu-271.

It belongs to the diacylglycerol/lipid kinase family. YegS lipid kinase subfamily. The cofactor is Mg(2+). Ca(2+) serves as cofactor.

The protein localises to the cytoplasm. Functionally, probably phosphorylates lipids; the in vivo substrate is unknown. This is Probable lipid kinase YegS from Shigella dysenteriae serotype 1 (strain Sd197).